The chain runs to 180 residues: Ribulose bisphosphate carboxylase small subunit, chloroplastic (180 aa).

A chloroplast-targeting transit peptide spans 1-56; the sequence is MALISSAAVTTVNRASSAQANLVAPFTGLKSSAGFPVTKKTNNDITSIASNGGRVN.

This sequence belongs to the RuBisCO small chain family. As to quaternary structure, heterohexadecamer of 8 large and 8 small subunits.

Its subcellular location is the plastid. The protein resides in the chloroplast. Functionally, ruBisCO catalyzes two reactions: the carboxylation of D-ribulose 1,5-bisphosphate, the primary event in carbon dioxide fixation, as well as the oxidative fragmentation of the pentose substrate. Both reactions occur simultaneously and in competition at the same active site. Although the small subunit is not catalytic it is essential for maximal activity. This Medicago sativa (Alfalfa) protein is Ribulose bisphosphate carboxylase small subunit, chloroplastic.